The chain runs to 859 residues: Leucine--tRNA ligase (859 aa).

Residues 42–52 (PYPSGRLHMGH) carry the 'HIGH' region motif. A 'KMSKS' region motif is present at residues 618 to 622 (KMSKS). Lys-621 provides a ligand contact to ATP.

The protein belongs to the class-I aminoacyl-tRNA synthetase family.

The protein resides in the cytoplasm. It carries out the reaction tRNA(Leu) + L-leucine + ATP = L-leucyl-tRNA(Leu) + AMP + diphosphate. The chain is Leucine--tRNA ligase from Shewanella sp. (strain MR-4).